A 208-amino-acid chain; its full sequence is ATP synthase subunit b (208 aa).

Residues 1 to 18 are compositionally biased toward polar residues; the sequence is MFVSTAFAQTATESQPAS. The interval 1–26 is disordered; sequence MFVSTAFAQTATESQPASTAGEHGAA. Residues 56-78 form a helical membrane-spanning segment; it reads SQVLWLAITFGLFYLFLSRVVLP.

It belongs to the ATPase B chain family. F-type ATPases have 2 components, F(1) - the catalytic core - and F(0) - the membrane proton channel. F(1) has five subunits: alpha(3), beta(3), gamma(1), delta(1), epsilon(1). F(0) has three main subunits: a(1), b(2) and c(10-14). The alpha and beta chains form an alternating ring which encloses part of the gamma chain. F(1) is attached to F(0) by a central stalk formed by the gamma and epsilon chains, while a peripheral stalk is formed by the delta and b chains.

The protein localises to the cell inner membrane. In terms of biological role, f(1)F(0) ATP synthase produces ATP from ADP in the presence of a proton or sodium gradient. F-type ATPases consist of two structural domains, F(1) containing the extramembraneous catalytic core and F(0) containing the membrane proton channel, linked together by a central stalk and a peripheral stalk. During catalysis, ATP synthesis in the catalytic domain of F(1) is coupled via a rotary mechanism of the central stalk subunits to proton translocation. Its function is as follows. Component of the F(0) channel, it forms part of the peripheral stalk, linking F(1) to F(0). The sequence is that of ATP synthase subunit b from Brucella melitensis biotype 1 (strain ATCC 23456 / CCUG 17765 / NCTC 10094 / 16M).